A 396-amino-acid chain; its full sequence is Elongation factor Tu (396 aa).

The tr-type G domain maps to Lys-10 to Val-205. Residues Gly-19–Thr-26 are G1. Residue Gly-19–Thr-26 coordinates GTP. Thr-26 contributes to the Mg(2+) binding site. Residues Gly-62–Asn-66 form a G2 region. Residues Asp-83–Gly-86 form a G3 region. Residues Asp-83–His-87 and Asn-138–Asp-141 each bind GTP. The tract at residues Asn-138 to Asp-141 is G4. The segment at Ser-175 to Leu-177 is G5.

Belongs to the TRAFAC class translation factor GTPase superfamily. Classic translation factor GTPase family. EF-Tu/EF-1A subfamily. Monomer.

Its subcellular location is the cytoplasm. The catalysed reaction is GTP + H2O = GDP + phosphate + H(+). GTP hydrolase that promotes the GTP-dependent binding of aminoacyl-tRNA to the A-site of ribosomes during protein biosynthesis. The sequence is that of Elongation factor Tu from Corynebacterium efficiens (strain DSM 44549 / YS-314 / AJ 12310 / JCM 11189 / NBRC 100395).